Here is a 37-residue protein sequence, read N- to C-terminus: Cytochrome b6-f complex subunit 5 (37 aa).

Residues 5–25 form a helical membrane-spanning segment; the sequence is LLSGIVLGLISITSAGLFVTA.

This sequence belongs to the PetG family. As to quaternary structure, the 4 large subunits of the cytochrome b6-f complex are cytochrome b6, subunit IV (17 kDa polypeptide, PetD), cytochrome f and the Rieske protein, while the 4 small subunits are PetG, PetL, PetM and PetN. The complex functions as a dimer.

The protein localises to the plastid. It localises to the chloroplast thylakoid membrane. Its function is as follows. Component of the cytochrome b6-f complex, which mediates electron transfer between photosystem II (PSII) and photosystem I (PSI), cyclic electron flow around PSI, and state transitions. PetG is required for either the stability or assembly of the cytochrome b6-f complex. This is Cytochrome b6-f complex subunit 5 from Psilotum nudum (Whisk fern).